A 183-amino-acid chain; its full sequence is Probable transcription termination protein NusA (183 aa).

Residues 32–98 (DERVAFIVKE…DDVWVKRVGK (67 aa)) form the KH domain. The disordered stretch occupies residues 149–183 (RKRAKRPVVKDQQQEQTETKQETDVQQDVKETVKE). Residues 156-183 (VVKDQQQEQTETKQETDVQQDVKETVKE) are compositionally biased toward basic and acidic residues.

The protein belongs to the NusA family.

The protein localises to the cytoplasm. Its function is as follows. Participates in transcription termination. The polypeptide is Probable transcription termination protein NusA (Methanocaldococcus jannaschii (strain ATCC 43067 / DSM 2661 / JAL-1 / JCM 10045 / NBRC 100440) (Methanococcus jannaschii)).